Consider the following 430-residue polypeptide: MAAAASYFSGTALMPSQRSGAPAPEYSAAGTGAAAAPSPSKPRDPRFSGCVPATVLHISRSFAAALAADGGGDPVFSIDGVETTNVRVLGRVVSVVSRDTDVCFTLDDSTGKIPLVRWITDQSDTRDTSYIQEGVYVKVQVNLMGFQAKKQGLARSIRPINNFNEVVLHFIECMHVHLESVQSKMQRQLPPSVQTNEYTHVPSSGGVRDYQVHFTPQVNQGLPPAVQTNTSTYVPLLGGVRDHQAHFAQVNQGQFSPAVQANTSTHLPFSGGVGEHQIHFTPKVNQGQFPPSVQTNTSAHVPYSGGFREHQVHFTPPVNQGQFPPAVQTNLYNHAASSGGVREQVHLTQANQFSAYSSTGGLQHDPQRMVLEALQQPDILALEHGAHVDELVRRTGMPKANIMGVVKHLAAAGFVYWTIDDNHVKSMCNG.

Residues 14-46 are disordered; sequence MPSQRSGAPAPEYSAAGTGAAAAPSPSKPRDPR. The segment covering 23–38 has biased composition (low complexity); that stretch reads APEYSAAGTGAAAAPS. The OB DNA-binding region spans 86-160; that stretch reads VRVLGRVVSV…QGLARSIRPI (75 aa).

It belongs to the replication factor A protein 2 family. In terms of assembly, heterotrimer of RPA1, RPA2 and RPA3 (canonical replication protein A complex). Interacts with RPA1C and RPA3. In terms of processing, phosphorylated in a cell-cycle-dependent manner (from the S phase until mitosis). In response to DNA damage, recruited to DNA-repair nuclear foci, as a hypophosphorylated form.

The protein resides in the nucleus. Functionally, component of the replication protein A complex (RPA) required for DNA recombination, repair and replication. The activity of RPA is mediated by single-stranded DNA binding and protein interactions. The polypeptide is Replication protein A 32 kDa subunit C (RPA2C) (Oryza sativa subsp. japonica (Rice)).